Here is a 215-residue protein sequence, read N- to C-terminus: Chaperone protein TorD (215 aa).

It belongs to the TorD/DmsD family. TorD subfamily.

Its subcellular location is the cytoplasm. Its function is as follows. Involved in the biogenesis of TorA. Acts on TorA before the insertion of the molybdenum cofactor and, as a result, probably favors a conformation of the apoenzyme that is competent for acquiring the cofactor. This chain is Chaperone protein TorD, found in Aliivibrio fischeri (strain ATCC 700601 / ES114) (Vibrio fischeri).